Consider the following 231-residue polypeptide: MLDREGFRPNVGIILINARNEVFWGKRIGEHSWQFPQGGIKYGETPEQAMYRELHEEIGLLPEHVRIVGRTRDWLRYEVPDKFIRREIRGHYRGQKQIWFLLRMAGRDCDVHLRATEHPEFDAWRWSDYWVPLEAVIEFKRDVYQLALTELSRFLNRNPRVPLSPYGVHHGRHGSGQRYAQQPGQPPTLAQRRPLQPVTQVAPVAPAAEAVQAVESDAVLPATPAPNPTES.

Residues 6–149 form the Nudix hydrolase domain; that stretch reads GFRPNVGIIL…KRDVYQLALT (144 aa). Positions 38–59 match the Nudix box motif; the sequence is GGIKYGETPEQAMYRELHEEIG. The interval 168–200 is disordered; it reads VHHGRHGSGQRYAQQPGQPPTLAQRRPLQPVTQ.

Belongs to the Nudix hydrolase family. RppH subfamily. It depends on a divalent metal cation as a cofactor.

Functionally, accelerates the degradation of transcripts by removing pyrophosphate from the 5'-end of triphosphorylated RNA, leading to a more labile monophosphorylated state that can stimulate subsequent ribonuclease cleavage. This Cupriavidus pinatubonensis (strain JMP 134 / LMG 1197) (Cupriavidus necator (strain JMP 134)) protein is RNA pyrophosphohydrolase.